Reading from the N-terminus, the 173-residue chain is Acireductone dioxygenase 1 (173 aa).

The Fe(2+) site is built by H96, H98, E102, and H140. Residues H96, H98, E102, and H140 each coordinate Ni(2+).

This sequence belongs to the acireductone dioxygenase (ARD) family. Monomer. Fe(2+) serves as cofactor. The cofactor is Ni(2+).

It carries out the reaction 1,2-dihydroxy-5-(methylsulfanyl)pent-1-en-3-one + O2 = 3-(methylsulfanyl)propanoate + CO + formate + 2 H(+). The catalysed reaction is 1,2-dihydroxy-5-(methylsulfanyl)pent-1-en-3-one + O2 = 4-methylsulfanyl-2-oxobutanoate + formate + 2 H(+). Its pathway is amino-acid biosynthesis; L-methionine biosynthesis via salvage pathway; L-methionine from S-methyl-5-thio-alpha-D-ribose 1-phosphate: step 5/6. Functionally, catalyzes 2 different reactions between oxygen and the acireductone 1,2-dihydroxy-3-keto-5-methylthiopentene (DHK-MTPene) depending upon the metal bound in the active site. Fe-containing acireductone dioxygenase (Fe-ARD) produces formate and 2-keto-4-methylthiobutyrate (KMTB), the alpha-ketoacid precursor of methionine in the methionine recycle pathway. Ni-containing acireductone dioxygenase (Ni-ARD) produces methylthiopropionate, carbon monoxide and formate, and does not lie on the methionine recycle pathway. The chain is Acireductone dioxygenase 1 from Pectobacterium atrosepticum (strain SCRI 1043 / ATCC BAA-672) (Erwinia carotovora subsp. atroseptica).